Consider the following 285-residue polypeptide: Large ribosomal subunit protein uL1m (285 aa).

The N-terminal 19 residues, 1–19 (MLSVVAIPKICVTGPARRC), are a transit peptide targeting the mitochondrion.

The protein belongs to the universal ribosomal protein uL1 family. As to quaternary structure, component of the mitochondrial large ribosomal subunit (mt-LSU). Mature yeast 74S mitochondrial ribosomes consist of a small (37S) and a large (54S) subunit. The 37S small subunit contains a 15S ribosomal RNA (15S mt-rRNA) and 34 different proteins. The 54S large subunit contains a 21S rRNA (21S mt-rRNA) and 46 different proteins.

It localises to the mitochondrion. Component of the mitochondrial ribosome (mitoribosome), a dedicated translation machinery responsible for the synthesis of mitochondrial genome-encoded proteins, including at least some of the essential transmembrane subunits of the mitochondrial respiratory chain. The mitoribosomes are attached to the mitochondrial inner membrane and translation products are cotranslationally integrated into the membrane. This Saccharomyces cerevisiae (strain ATCC 204508 / S288c) (Baker's yeast) protein is Large ribosomal subunit protein uL1m (MRPL1).